Here is a 588-residue protein sequence, read N- to C-terminus: L-fucose isomerase (588 aa).

Residues Glu335 and Asp359 each act as proton acceptor in the active site. 3 residues coordinate Mn(2+): Glu335, Asp359, and His525.

Belongs to the L-fucose isomerase family. The cofactor is Mn(2+).

The protein resides in the cytoplasm. The enzyme catalyses L-fucose = L-fuculose. It functions in the pathway carbohydrate degradation; L-fucose degradation; L-lactaldehyde and glycerone phosphate from L-fucose: step 1/3. Its function is as follows. Converts the aldose L-fucose into the corresponding ketose L-fuculose. The chain is L-fucose isomerase from Streptococcus pneumoniae (strain Hungary19A-6).